The sequence spans 434 residues: ATP-dependent protease ATPase subunit HslU (434 aa).

Residues I18, 60–65 (GVGKTE), D247, E312, and R384 contribute to the ATP site.

The protein belongs to the ClpX chaperone family. HslU subfamily. A double ring-shaped homohexamer of HslV is capped on each side by a ring-shaped HslU homohexamer. The assembly of the HslU/HslV complex is dependent on binding of ATP.

It localises to the cytoplasm. Its function is as follows. ATPase subunit of a proteasome-like degradation complex; this subunit has chaperone activity. The binding of ATP and its subsequent hydrolysis by HslU are essential for unfolding of protein substrates subsequently hydrolyzed by HslV. HslU recognizes the N-terminal part of its protein substrates and unfolds these before they are guided to HslV for hydrolysis. This Brucella abortus (strain S19) protein is ATP-dependent protease ATPase subunit HslU.